A 103-amino-acid chain; its full sequence is ATP synthase F(0) complex subunit g, mitochondrial (103 aa).

Ala-2 bears the N-acetylalanine mark. N6-acetyllysine occurs at positions 11, 24, 35, and 54.

This sequence belongs to the ATPase g subunit family. Component of the ATP synthase complex composed at least of ATP5F1A/subunit alpha, ATP5F1B/subunit beta, ATP5MC1/subunit c (homooctomer), MT-ATP6/subunit a, MT-ATP8/subunit 8, ATP5ME/subunit e, ATP5MF/subunit f, ATP5MG/subunit g, ATP5MK/subunit k, ATP5MJ/subunit j, ATP5F1C/subunit gamma, ATP5F1D/subunit delta, ATP5F1E/subunit epsilon, ATP5PF/subunit F6, ATP5PB/subunit b, ATP5PD/subunit d, ATP5PO/subunit OSCP. ATP synthase complex consists of a soluble F(1) head domain (subunits alpha(3) and beta(3)) - the catalytic core - and a membrane F(0) domain - the membrane proton channel (subunits c, a, 8, e, f, g, k and j). These two domains are linked by a central stalk (subunits gamma, delta, and epsilon) rotating inside the F1 region and a stationary peripheral stalk (subunits F6, b, d, and OSCP).

The protein resides in the mitochondrion. It localises to the mitochondrion inner membrane. Its function is as follows. Subunit g, of the mitochondrial membrane ATP synthase complex (F(1)F(0) ATP synthase or Complex V) that produces ATP from ADP in the presence of a proton gradient across the membrane which is generated by electron transport complexes of the respiratory chain. ATP synthase complex consist of a soluble F(1) head domain - the catalytic core - and a membrane F(1) domain - the membrane proton channel. These two domains are linked by a central stalk rotating inside the F(1) region and a stationary peripheral stalk. During catalysis, ATP synthesis in the catalytic domain of F(1) is coupled via a rotary mechanism of the central stalk subunits to proton translocation. In vivo, can only synthesize ATP although its ATP hydrolase activity can be activated artificially in vitro. Part of the complex F(0) domain. The protein is ATP synthase F(0) complex subunit g, mitochondrial of Homo sapiens (Human).